We begin with the raw amino-acid sequence, 489 residues long: Betaine aldehyde dehydrogenase (489 aa).

Asn-93 is a binding site for K(+). 150–152 (GAW) lines the NAD(+) pocket. Lys-162 serves as the catalytic Charge relay system. 176-179 (KPSE) provides a ligand contact to NAD(+). Position 180 (Val-180) interacts with K(+). 229 to 232 (EVGT) lines the NAD(+) pocket. Residue Leu-245 participates in K(+) binding. Glu-251 (proton acceptor) is an active-site residue. Gly-253, Cys-285, and Glu-386 together coordinate NAD(+). Cys-285 functions as the Nucleophile in the catalytic mechanism. Position 285 is a cysteine sulfenic acid (-SOH) (Cys-285). Lys-456 and Gly-459 together coordinate K(+). Residue Glu-463 is the Charge relay system of the active site.

Belongs to the aldehyde dehydrogenase family. Dimer of dimers. The cofactor is K(+).

The catalysed reaction is betaine aldehyde + NAD(+) + H2O = glycine betaine + NADH + 2 H(+). It functions in the pathway amine and polyamine biosynthesis; betaine biosynthesis via choline pathway; betaine from betaine aldehyde: step 1/1. Involved in the biosynthesis of the osmoprotectant glycine betaine. Catalyzes the irreversible oxidation of betaine aldehyde to the corresponding acid. This chain is Betaine aldehyde dehydrogenase, found in Chromohalobacter salexigens (strain ATCC BAA-138 / DSM 3043 / CIP 106854 / NCIMB 13768 / 1H11).